The chain runs to 134 residues: Profilin-2 (134 aa).

Residues cysteine 13 and cysteine 118 are joined by a disulfide bond. Positions 84-100 (AVIRGKKGSGGITIKKT) match the Involved in PIP2 interaction motif. A Phosphothreonine modification is found at threonine 114.

It belongs to the profilin family. As to quaternary structure, occurs in many kinds of cells as a complex with monomeric actin in a 1:1 ratio. Phosphorylated by MAP kinases.

The protein localises to the cytoplasm. The protein resides in the cytoskeleton. Binds to actin and affects the structure of the cytoskeleton. At high concentrations, profilin prevents the polymerization of actin, whereas it enhances it at low concentrations. The sequence is that of Profilin-2 from Olea europaea (Common olive).